We begin with the raw amino-acid sequence, 230 residues long: Orotidine 5'-phosphate decarboxylase (230 aa).

Substrate is bound by residues Asp10, Lys31, Asp58–Thr67, Thr117, Arg179, Gln188, Gly208, and Arg209. Catalysis depends on Lys60, which acts as the Proton donor.

This sequence belongs to the OMP decarboxylase family. Type 1 subfamily. Homodimer.

It catalyses the reaction orotidine 5'-phosphate + H(+) = UMP + CO2. It functions in the pathway pyrimidine metabolism; UMP biosynthesis via de novo pathway; UMP from orotate: step 2/2. Catalyzes the decarboxylation of orotidine 5'-monophosphate (OMP) to uridine 5'-monophosphate (UMP). The chain is Orotidine 5'-phosphate decarboxylase from Staphylococcus aureus (strain Mu3 / ATCC 700698).